Here is a 371-residue protein sequence, read N- to C-terminus: 3-dehydroquinate synthase (371 aa).

NAD(+) is bound by residues D70–K75, G104–D108, T128–T129, K141, and K150. 3 residues coordinate Zn(2+): E183, H246, and H262.

Belongs to the sugar phosphate cyclases superfamily. Dehydroquinate synthase family. The cofactor is Co(2+). Requires Zn(2+) as cofactor. It depends on NAD(+) as a cofactor.

The protein localises to the cytoplasm. It catalyses the reaction 7-phospho-2-dehydro-3-deoxy-D-arabino-heptonate = 3-dehydroquinate + phosphate. It participates in metabolic intermediate biosynthesis; chorismate biosynthesis; chorismate from D-erythrose 4-phosphate and phosphoenolpyruvate: step 2/7. Its function is as follows. Catalyzes the conversion of 3-deoxy-D-arabino-heptulosonate 7-phosphate (DAHP) to dehydroquinate (DHQ). This chain is 3-dehydroquinate synthase, found in Saccharopolyspora erythraea (strain ATCC 11635 / DSM 40517 / JCM 4748 / NBRC 13426 / NCIMB 8594 / NRRL 2338).